A 2626-amino-acid chain; its full sequence is Unconventional myosin-IXa (2626 aa).

The 99-residue stretch at 14 to 112 (NEHTLRIYPG…YRFLLREKNL (99 aa)) folds into the Ras-associating domain. In terms of domain architecture, Myosin motor spans 146–1017 (KDFDDLCSLP…ERQHLQDLLH (872 aa)). Residues 175-195 (IYTYVGSILIAINPFKFLPIY) form a helical membrane-spanning segment. 239–246 (GESGSGKT) lines the ATP pocket. Phosphoserine is present on S755. The actin-binding stretch occupies residues 908–919 (QAEPYFVKCIRS). IQ domains lie at 1021 to 1041 (LRRI…QQFL), 1043 to 1072 (LRQA…EKDA), 1075 to 1104 (MASA…AAVI), 1116 to 1145 (RHRA…KIIL), and 1139 to 1168 (QRNK…ERLK). The neck or regulatory domain stretch occupies residues 1022–1163 (RRIILLQRWF…RARQRYKALK (142 aa)). Positions 1164 to 2589 (EERLKETKLE…LKNVKNSPQK (1426 aa)) are tail. Basic and acidic residues predominate over residues 1221-1240 (RESSMDFSKESPDKQQERGR). The disordered stretch occupies residues 1221–1276 (RESSMDFSKESPDKQQERGRSQSGTDLQGDVIVRQRPKSLEDLHQKKVGRAKRESR). The residue at position 1243 (S1243) is a Phosphoserine. Position 1245 is a phosphothreonine (T1245). S1259 is subject to Phosphoserine. Residues 1265 to 1292 (QKKVGRAKRESRRMRELEQAIFSLELLK) are a coiled coil. Over residues 1266-1276 (KKVGRAKRESR) the composition is skewed to basic residues. 2 positions are modified to phosphoserine: S1300 and S1318. A compositionally biased stretch (polar residues) spans 1360-1375 (PSTFTNPKFDSQNNAL). The tract at residues 1360-1397 (PSTFTNPKFDSQNNALSASSETSSTFSGKGASSDSEHL) is disordered. The segment covering 1376 to 1386 (SASSETSSTFS) has biased composition (low complexity). Residues 1493–1540 (TVLKKLEKLNIEKEKRQKQLQQQNEKEMMEQIRQQTDILEKERKAFKT) adopt a coiled-coil conformation. Disordered stretches follow at residues 1562–1602 (VERP…PPKD), 1618–1673 (SRTV…SRPI), 1689–1726 (GNPQ…RMAR), 1765–1784 (SELG…SEMT), and 1872–1907 (QYHP…KRGV). Basic and acidic residues-rich tracts occupy residues 1620–1632 (TVKE…RMGT) and 1659–1669 (HRSDDPSREGS). Residues 1716–1726 (PAHKKKARMAR) show a composition bias toward basic residues. Residues 1772-1784 (SLGQASHSDSEMT) are compositionally biased toward polar residues. Over residues 1887 to 1899 (CRKEFKENKEPSP) the composition is skewed to basic and acidic residues. The residue at position 2016 (S2016) is a Phosphoserine. Residues 2067–2116 (GHMFKATQYSIPTYCEYCSSLIWIMDRASVCKLCKYACHKKCCLKTTAKC) form a Phorbol-ester/DAG-type zinc finger. The region spanning 2131–2319 (VELSRLTSED…LIVVEQMNKY (189 aa)) is the Rho-GAP domain. The tract at residues 2365–2385 (SGKGRLHRGSHPNPSSPVIVR) is disordered. A Phosphoserine modification is found at S2380. Residues 2408–2444 (TDQQQAAMQQEEKVLTEQIENLQKEKEELTFEMLVLE) adopt a coiled-coil conformation. The tract at residues 2449 to 2527 (DDEALESEAS…NTTSSHGTRK (79 aa)) is disordered. A compositionally biased stretch (low complexity) spans 2504–2522 (SLDSVSSSVSSCLSNTTSS). S2542 is subject to Phosphoserine. The segment at 2552–2614 (PLGQAKSLED…TVDSDCSSTQ (63 aa)) is disordered.

The protein belongs to the TRAFAC class myosin-kinesin ATPase superfamily. Myosin family. In terms of processing, phosphorylated by ALPK1 following monosodium urate monohydrate (MSU)-induced inflammation. As to expression, expressed at high levels in brain, followed by testis and spleen. Expressed at very low levels, in kidney. Detected abundantly in brain and testis and at lower levels in adrenal gland, kidney, lung and spleen (at protein level). In adrenal gland it is mostly found in the medulla but not in the cortex. In brain, it is found in the cerebellum and the CA2-CA3 regions of the hippocampus.

The protein localises to the membrane. It is found in the cytoplasm. Its subcellular location is the synapse. It localises to the cell projection. The protein resides in the growth cone. Functionally, myosins are actin-based motor molecules with ATPase activity. Unconventional myosins serve in intracellular movements. Regulates Rho by stimulating it's GTPase activity in neurons. Required for the regulation of neurite branching and motor neuron axon guidance. In Rattus norvegicus (Rat), this protein is Unconventional myosin-IXa (Myo9a).